The chain runs to 84 residues: Small ribosomal subunit protein bS18 (84 aa).

This sequence belongs to the bacterial ribosomal protein bS18 family. In terms of assembly, part of the 30S ribosomal subunit. Forms a tight heterodimer with protein bS6.

Functionally, binds as a heterodimer with protein bS6 to the central domain of the 16S rRNA, where it helps stabilize the platform of the 30S subunit. This chain is Small ribosomal subunit protein bS18, found in Methylorubrum extorquens (strain CM4 / NCIMB 13688) (Methylobacterium extorquens).